Reading from the N-terminus, the 487-residue chain is Inosine-5'-monophosphate dehydrogenase (487 aa).

2 consecutive CBS domains span residues 93–149 (IVSD…NKTV) and 153–214 (MTPK…CKDE). NAD(+)-binding positions include aspartate 248, 248-250 (DSS), and 298-300 (GIG). K(+) contacts are provided by glycine 300 and glycine 302. Serine 303 serves as a coordination point for IMP. Cysteine 305 is a K(+) binding site. Cysteine 305 acts as the Thioimidate intermediate in catalysis. IMP contacts are provided by residues 338 to 340 (DGG), 361 to 362 (GS), and 385 to 389 (YRGMG). The active-site Proton acceptor is arginine 401. Glutamate 415 serves as a coordination point for IMP. K(+) is bound by residues glutamate 469, serine 470, and histidine 471.

It belongs to the IMPDH/GMPR family. Homotetramer. Requires K(+) as cofactor.

The enzyme catalyses IMP + NAD(+) + H2O = XMP + NADH + H(+). It participates in purine metabolism; XMP biosynthesis via de novo pathway; XMP from IMP: step 1/1. With respect to regulation, mycophenolic acid (MPA) is a non-competitive inhibitor that prevents formation of the closed enzyme conformation by binding to the same site as the amobile flap. In contrast, mizoribine monophosphate (MZP) is a competitive inhibitor that induces the closed conformation. MPA is a potent inhibitor of mammalian IMPDHs but a poor inhibitor of the bacterial enzymes. MZP is a more potent inhibitor of bacterial IMPDH. Its function is as follows. Catalyzes the conversion of inosine 5'-phosphate (IMP) to xanthosine 5'-phosphate (XMP), the first committed and rate-limiting step in the de novo synthesis of guanine nucleotides, and therefore plays an important role in the regulation of cell growth. The chain is Inosine-5'-monophosphate dehydrogenase from Pasteurella multocida (strain Pm70).